A 273-amino-acid polypeptide reads, in one-letter code: Urease accessory protein UreD (273 aa).

The protein belongs to the UreD family. In terms of assembly, ureD, UreF and UreG form a complex that acts as a GTP-hydrolysis-dependent molecular chaperone, activating the urease apoprotein by helping to assemble the nickel containing metallocenter of UreC. The UreE protein probably delivers the nickel.

Its subcellular location is the cytoplasm. Required for maturation of urease via the functional incorporation of the urease nickel metallocenter. In Mycolicibacterium gilvum (strain PYR-GCK) (Mycobacterium gilvum (strain PYR-GCK)), this protein is Urease accessory protein UreD.